Here is a 455-residue protein sequence, read N- to C-terminus: Bifunctional protein GlmU (455 aa).

The pyrophosphorylase stretch occupies residues 1–232; sequence MASITGALIL…DPNLLGVNDP (232 aa). UDP-N-acetyl-alpha-D-glucosamine is bound by residues 10–13, lysine 24, glutamine 75, and 80–81; these read LAAG and GT. Aspartate 106 contacts Mg(2+). UDP-N-acetyl-alpha-D-glucosamine-binding residues include glycine 141, glutamate 155, asparagine 172, and asparagine 230. Mg(2+) is bound at residue asparagine 230. The linker stretch occupies residues 233 to 253; sequence AELIRSEALVRARIALNWIEK. Positions 254–455 are N-acetyltransferase; the sequence is RVLIHAPETV…QTTLPRRRNS (202 aa). Positions 336 and 354 each coordinate UDP-N-acetyl-alpha-D-glucosamine. Histidine 366 (proton acceptor) is an active-site residue. UDP-N-acetyl-alpha-D-glucosamine-binding residues include tyrosine 369 and asparagine 380. Acetyl-CoA contacts are provided by residues alanine 383, 389–390, serine 408, alanine 426, and arginine 443; that span reads NY.

In the N-terminal section; belongs to the N-acetylglucosamine-1-phosphate uridyltransferase family. The protein in the C-terminal section; belongs to the transferase hexapeptide repeat family. Homotrimer. Mg(2+) is required as a cofactor.

The protein localises to the cytoplasm. The catalysed reaction is alpha-D-glucosamine 1-phosphate + acetyl-CoA = N-acetyl-alpha-D-glucosamine 1-phosphate + CoA + H(+). The enzyme catalyses N-acetyl-alpha-D-glucosamine 1-phosphate + UTP + H(+) = UDP-N-acetyl-alpha-D-glucosamine + diphosphate. It participates in nucleotide-sugar biosynthesis; UDP-N-acetyl-alpha-D-glucosamine biosynthesis; N-acetyl-alpha-D-glucosamine 1-phosphate from alpha-D-glucosamine 6-phosphate (route II): step 2/2. Its pathway is nucleotide-sugar biosynthesis; UDP-N-acetyl-alpha-D-glucosamine biosynthesis; UDP-N-acetyl-alpha-D-glucosamine from N-acetyl-alpha-D-glucosamine 1-phosphate: step 1/1. The protein operates within bacterial outer membrane biogenesis; LPS lipid A biosynthesis. In terms of biological role, catalyzes the last two sequential reactions in the de novo biosynthetic pathway for UDP-N-acetylglucosamine (UDP-GlcNAc). The C-terminal domain catalyzes the transfer of acetyl group from acetyl coenzyme A to glucosamine-1-phosphate (GlcN-1-P) to produce N-acetylglucosamine-1-phosphate (GlcNAc-1-P), which is converted into UDP-GlcNAc by the transfer of uridine 5-monophosphate (from uridine 5-triphosphate), a reaction catalyzed by the N-terminal domain. This is Bifunctional protein GlmU from Nitratidesulfovibrio vulgaris (strain DSM 19637 / Miyazaki F) (Desulfovibrio vulgaris).